The following is a 408-amino-acid chain: Serine/threonine transporter SstT (408 aa).

9 helical membrane passes run 11-31, 43-63, 82-102, 141-161, 192-212, 216-236, 290-310, 316-336, and 363-383; these read LANGSLVLQILVGIIAGVSLA, FLGSLFVGALKAIAPILVFIL, IVVLYLFGTFAAALTAVVLSM, ALMTGNYIGILAWGVGLGLAL, IGIFGLVAATFAETGFAAIAG, LLAVLLGAMAIIALIVNPLIV, IPLGATINMGGAAITITVLTL, LGIQVDLLTALLLSVVAAISA, and VAMQVVAVGFIIGVIQDAAET.

This sequence belongs to the dicarboxylate/amino acid:cation symporter (DAACS) (TC 2.A.23) family.

The protein localises to the cell inner membrane. It carries out the reaction L-serine(in) + Na(+)(in) = L-serine(out) + Na(+)(out). It catalyses the reaction L-threonine(in) + Na(+)(in) = L-threonine(out) + Na(+)(out). In terms of biological role, involved in the import of serine and threonine into the cell, with the concomitant import of sodium (symport system). This Shewanella sp. (strain ANA-3) protein is Serine/threonine transporter SstT.